The sequence spans 344 residues: Protein RecA (344 aa).

65–72 (GPESSGKT) provides a ligand contact to ATP.

It belongs to the RecA family.

The protein resides in the cytoplasm. Its function is as follows. Can catalyze the hydrolysis of ATP in the presence of single-stranded DNA, the ATP-dependent uptake of single-stranded DNA by duplex DNA, and the ATP-dependent hybridization of homologous single-stranded DNAs. It interacts with LexA causing its activation and leading to its autocatalytic cleavage. This Nitratiruptor sp. (strain SB155-2) protein is Protein RecA.